Here is a 285-residue protein sequence, read N- to C-terminus: Bifunctional protein FolD (285 aa).

Residues 166-168 (GAS) and I232 each bind NADP(+).

This sequence belongs to the tetrahydrofolate dehydrogenase/cyclohydrolase family. Homodimer.

It catalyses the reaction (6R)-5,10-methylene-5,6,7,8-tetrahydrofolate + NADP(+) = (6R)-5,10-methenyltetrahydrofolate + NADPH. The catalysed reaction is (6R)-5,10-methenyltetrahydrofolate + H2O = (6R)-10-formyltetrahydrofolate + H(+). Its pathway is one-carbon metabolism; tetrahydrofolate interconversion. Its function is as follows. Catalyzes the oxidation of 5,10-methylenetetrahydrofolate to 5,10-methenyltetrahydrofolate and then the hydrolysis of 5,10-methenyltetrahydrofolate to 10-formyltetrahydrofolate. The sequence is that of Bifunctional protein FolD from Actinobacillus succinogenes (strain ATCC 55618 / DSM 22257 / CCUG 43843 / 130Z).